The chain runs to 556 residues: Jerky protein homolog (556 aa).

The HTH psq-type domain maps to 11 to 62 (RGEKRKRVVLTLKEKIDICTRLEKGESRKALMQEYNVGMSTLYDIRAHKAQL). 2 consecutive DNA-binding regions (H-T-H motif) follow at residues 38-58 (RKAL…IRAH) and 110-142 (PMLI…FKAR). An HTH CENPB-type domain is found at 77-149 (QRRTLHTPKL…KARHGIKKLD (73 aa)). One can recognise a DDE-1 domain in the interval 213-382 (KDRLTVLMCA…VPSHVFRRAW (170 aa)). The residue at position 414 (Ser414) is a Phosphoserine. The segment at 439–482 (SWGVAGREAEGGRPPAATSPAEVVWSSEKTPKADQDGRGDPGEG) is disordered. A compositionally biased stretch (basic and acidic residues) spans 467–479 (KTPKADQDGRGDP).

It belongs to the tigger transposable element derived protein family. As to expression, expressed ubiquitously.

The protein localises to the nucleus. Functionally, may bind DNA. This Homo sapiens (Human) protein is Jerky protein homolog.